The following is a 183-amino-acid chain: ATP synthase subunit b, chloroplastic (183 aa).

Residues 27–49 (LATNLINLTVVVGVLIFFGKGVL) traverse the membrane as a helical segment.

This sequence belongs to the ATPase B chain family. In terms of assembly, F-type ATPases have 2 components, F(1) - the catalytic core - and F(0) - the membrane proton channel. F(1) has five subunits: alpha(3), beta(3), gamma(1), delta(1), epsilon(1). F(0) has four main subunits: a(1), b(1), b'(1) and c(10-14). The alpha and beta chains form an alternating ring which encloses part of the gamma chain. F(1) is attached to F(0) by a central stalk formed by the gamma and epsilon chains, while a peripheral stalk is formed by the delta, b and b' chains.

It is found in the plastid. The protein localises to the chloroplast thylakoid membrane. F(1)F(0) ATP synthase produces ATP from ADP in the presence of a proton or sodium gradient. F-type ATPases consist of two structural domains, F(1) containing the extramembraneous catalytic core and F(0) containing the membrane proton channel, linked together by a central stalk and a peripheral stalk. During catalysis, ATP synthesis in the catalytic domain of F(1) is coupled via a rotary mechanism of the central stalk subunits to proton translocation. In terms of biological role, component of the F(0) channel, it forms part of the peripheral stalk, linking F(1) to F(0). The polypeptide is ATP synthase subunit b, chloroplastic (Hordeum vulgare (Barley)).